The primary structure comprises 542 residues: CTP synthase (542 aa).

The tract at residues 1 to 265 (MTRYIFITGG…DDEVLSVFGI (265 aa)) is amidoligase domain. Ser13 serves as a coordination point for CTP. Ser13 lines the UTP pocket. ATP is bound by residues 14 to 19 (SLGKGL) and Asp71. Mg(2+)-binding residues include Asp71 and Glu139. CTP-binding positions include 146 to 148 (DIE), 186 to 191 (KTKPTQ), and Lys222. Residues 186–191 (KTKPTQ) and Lys222 each bind UTP. Positions 291 to 541 (TIAIVGKYTG…VEAAVEQSRL (251 aa)) constitute a Glutamine amidotransferase type-1 domain. Gly353 contributes to the L-glutamine binding site. Cys380 acts as the Nucleophile; for glutamine hydrolysis in catalysis. L-glutamine contacts are provided by residues 381-384 (FGMQ), Glu404, and Arg469. Active-site residues include His514 and Glu516.

This sequence belongs to the CTP synthase family. As to quaternary structure, homotetramer.

The catalysed reaction is UTP + L-glutamine + ATP + H2O = CTP + L-glutamate + ADP + phosphate + 2 H(+). It catalyses the reaction L-glutamine + H2O = L-glutamate + NH4(+). The enzyme catalyses UTP + NH4(+) + ATP = CTP + ADP + phosphate + 2 H(+). It functions in the pathway pyrimidine metabolism; CTP biosynthesis via de novo pathway; CTP from UDP: step 2/2. Allosterically activated by GTP, when glutamine is the substrate; GTP has no effect on the reaction when ammonia is the substrate. The allosteric effector GTP functions by stabilizing the protein conformation that binds the tetrahedral intermediate(s) formed during glutamine hydrolysis. Inhibited by the product CTP, via allosteric rather than competitive inhibition. Catalyzes the ATP-dependent amination of UTP to CTP with either L-glutamine or ammonia as the source of nitrogen. Regulates intracellular CTP levels through interactions with the four ribonucleotide triphosphates. The polypeptide is CTP synthase (Parvibaculum lavamentivorans (strain DS-1 / DSM 13023 / NCIMB 13966)).